We begin with the raw amino-acid sequence, 31 residues long: Cyclotide mden-J (31 aa).

Positions 1 to 31 form a cross-link, cyclopeptide (Gly-Asn); sequence GSIPCGESCVYIPCISSIVGCACKSKVCYKN. 3 disulfide bridges follow: Cys5–Cys21, Cys9–Cys23, and Cys14–Cys28.

The protein belongs to the cyclotide family. Bracelet subfamily. Post-translationally, this is a cyclic peptide.

Its function is as follows. Probably participates in a plant defense mechanism. This Melicytus dentatus (Tree violet) protein is Cyclotide mden-J.